The primary structure comprises 482 residues: tRNA sulfurtransferase (482 aa).

The THUMP domain occupies 61–165 (EQAIEALACI…GEELFIVSAI (105 aa)). Residues 183–184 (LI), Lys265, Gly287, and Gln296 each bind ATP. Cys344 and Cys456 are disulfide-bonded. Residues 404–482 (SGDNEVILDI…GFANVKVYRP (79 aa)) form the Rhodanese domain. Cys456 functions as the Cysteine persulfide intermediate in the catalytic mechanism.

Belongs to the ThiI family.

Its subcellular location is the cytoplasm. It catalyses the reaction [ThiI sulfur-carrier protein]-S-sulfanyl-L-cysteine + a uridine in tRNA + 2 reduced [2Fe-2S]-[ferredoxin] + ATP + H(+) = [ThiI sulfur-carrier protein]-L-cysteine + a 4-thiouridine in tRNA + 2 oxidized [2Fe-2S]-[ferredoxin] + AMP + diphosphate. The catalysed reaction is [ThiS sulfur-carrier protein]-C-terminal Gly-Gly-AMP + S-sulfanyl-L-cysteinyl-[cysteine desulfurase] + AH2 = [ThiS sulfur-carrier protein]-C-terminal-Gly-aminoethanethioate + L-cysteinyl-[cysteine desulfurase] + A + AMP + 2 H(+). It participates in cofactor biosynthesis; thiamine diphosphate biosynthesis. Catalyzes the ATP-dependent transfer of a sulfur to tRNA to produce 4-thiouridine in position 8 of tRNAs, which functions as a near-UV photosensor. Also catalyzes the transfer of sulfur to the sulfur carrier protein ThiS, forming ThiS-thiocarboxylate. This is a step in the synthesis of thiazole, in the thiamine biosynthesis pathway. The sulfur is donated as persulfide by IscS. The sequence is that of tRNA sulfurtransferase from Aeromonas hydrophila subsp. hydrophila (strain ATCC 7966 / DSM 30187 / BCRC 13018 / CCUG 14551 / JCM 1027 / KCTC 2358 / NCIMB 9240 / NCTC 8049).